A 398-amino-acid chain; its full sequence is Exodeoxyribonuclease 7 large subunit (398 aa).

It belongs to the XseA family. As to quaternary structure, heterooligomer composed of large and small subunits.

It localises to the cytoplasm. It carries out the reaction Exonucleolytic cleavage in either 5'- to 3'- or 3'- to 5'-direction to yield nucleoside 5'-phosphates.. In terms of biological role, bidirectionally degrades single-stranded DNA into large acid-insoluble oligonucleotides, which are then degraded further into small acid-soluble oligonucleotides. This is Exodeoxyribonuclease 7 large subunit from Chlorobaculum tepidum (strain ATCC 49652 / DSM 12025 / NBRC 103806 / TLS) (Chlorobium tepidum).